The primary structure comprises 278 residues: Elongation factor Ts (278 aa).

The involved in Mg(2+) ion dislocation from EF-Tu stretch occupies residues 81–84 (TDFV).

Belongs to the EF-Ts family.

The protein localises to the cytoplasm. In terms of biological role, associates with the EF-Tu.GDP complex and induces the exchange of GDP to GTP. It remains bound to the aminoacyl-tRNA.EF-Tu.GTP complex up to the GTP hydrolysis stage on the ribosome. This is Elongation factor Ts from Thermobifida fusca (strain YX).